The following is a 34-amino-acid chain: Photosystem II reaction center protein T (34 aa).

Residues 3–23 form a helical membrane-spanning segment; the sequence is ALVYTFLLVGTLGIIFFAIFF.

This sequence belongs to the PsbT family. PSII is composed of 1 copy each of membrane proteins PsbA, PsbB, PsbC, PsbD, PsbE, PsbF, PsbH, PsbI, PsbJ, PsbK, PsbL, PsbM, PsbT, PsbY, PsbZ, Psb30/Ycf12, at least 3 peripheral proteins of the oxygen-evolving complex and a large number of cofactors. It forms dimeric complexes.

It is found in the plastid. It localises to the chloroplast thylakoid membrane. In terms of biological role, found at the monomer-monomer interface of the photosystem II (PS II) dimer, plays a role in assembly and dimerization of PSII. PSII is a light-driven water plastoquinone oxidoreductase, using light energy to abstract electrons from H(2)O, generating a proton gradient subsequently used for ATP formation. The protein is Photosystem II reaction center protein T of Klebsormidium bilatum (Filamentous green alga).